The primary structure comprises 176 residues: Isopentenyl-diphosphate Delta-isomerase (176 aa).

Mn(2+) is bound by residues histidine 22 and histidine 28. The 135-residue stretch at 26–160 (LRHKAISVFI…PETFTPWLHI (135 aa)) folds into the Nudix hydrolase domain. Cysteine 62 is a catalytic residue. Histidine 64 lines the Mn(2+) pocket. Glutamate 82 is a Mg(2+) binding site. Residues glutamate 108 and glutamate 110 each contribute to the Mn(2+) site. Residue glutamate 110 is part of the active site.

This sequence belongs to the IPP isomerase type 1 family. It depends on Mg(2+) as a cofactor. Requires Mn(2+) as cofactor.

Its subcellular location is the cytoplasm. The catalysed reaction is isopentenyl diphosphate = dimethylallyl diphosphate. Its pathway is isoprenoid biosynthesis; dimethylallyl diphosphate biosynthesis; dimethylallyl diphosphate from isopentenyl diphosphate: step 1/1. The protein operates within porphyrin-containing compound metabolism; chlorophyll biosynthesis. In terms of biological role, catalyzes the 1,3-allylic rearrangement of the homoallylic substrate isopentenyl (IPP) to its highly electrophilic allylic isomer, dimethylallyl diphosphate (DMAPP). This Jannaschia sp. (strain CCS1) protein is Isopentenyl-diphosphate Delta-isomerase.